The chain runs to 207 residues: Small ribosomal subunit protein uS4 (207 aa).

The disordered stretch occupies residues 31 to 53; it reads KAKFDSKPGQHGRTSGARTSDFG. In terms of domain architecture, S4 RNA-binding spans 97–157; sequence SRLDNVVYRM…EKSKKQARIV (61 aa).

The protein belongs to the universal ribosomal protein uS4 family. As to quaternary structure, part of the 30S ribosomal subunit. Contacts protein S5. The interaction surface between S4 and S5 is involved in control of translational fidelity.

Its function is as follows. One of the primary rRNA binding proteins, it binds directly to 16S rRNA where it nucleates assembly of the body of the 30S subunit. In terms of biological role, with S5 and S12 plays an important role in translational accuracy. The protein is Small ribosomal subunit protein uS4 of Paracidovorax citrulli (strain AAC00-1) (Acidovorax citrulli).